The primary structure comprises 102 residues: Small ribosomal subunit protein eS24 (102 aa).

This sequence belongs to the eukaryotic ribosomal protein eS24 family.

The chain is Small ribosomal subunit protein eS24 from Methanococcus maripaludis (strain DSM 14266 / JCM 13030 / NBRC 101832 / S2 / LL).